The following is a 422-amino-acid chain: UDP-N-acetylglucosamine 1-carboxyvinyltransferase (422 aa).

22 to 23 (KN) provides a ligand contact to phosphoenolpyruvate. Arg94 provides a ligand contact to UDP-N-acetyl-alpha-D-glucosamine. Cys118 functions as the Proton donor in the catalytic mechanism. Cys118 bears the 2-(S-cysteinyl)pyruvic acid O-phosphothioketal mark. UDP-N-acetyl-alpha-D-glucosamine is bound by residues 123–127 (RPIDL), Asp309, and Leu331.

Belongs to the EPSP synthase family. MurA subfamily.

It is found in the cytoplasm. It catalyses the reaction phosphoenolpyruvate + UDP-N-acetyl-alpha-D-glucosamine = UDP-N-acetyl-3-O-(1-carboxyvinyl)-alpha-D-glucosamine + phosphate. It participates in cell wall biogenesis; peptidoglycan biosynthesis. In terms of biological role, cell wall formation. Adds enolpyruvyl to UDP-N-acetylglucosamine. The polypeptide is UDP-N-acetylglucosamine 1-carboxyvinyltransferase (Sulfurimonas denitrificans (strain ATCC 33889 / DSM 1251) (Thiomicrospira denitrificans (strain ATCC 33889 / DSM 1251))).